We begin with the raw amino-acid sequence, 633 residues long: Putative ankyrin repeat protein L774 (633 aa).

ANK repeat units lie at residues 91–120, 123–152, 221–250, 252–275, 338–367, 369–393, and 517–546; these read IYGH…EYDP, NCDD…FFKI, NVNK…EYDF, TILK…ILDS, DYDV…DVNN, MTYA…TLST, and DNLK…NSND.

The chain is Putative ankyrin repeat protein L774 from Acanthamoeba polyphaga mimivirus (APMV).